Consider the following 240-residue polypeptide: Ubiquinone biosynthesis O-methyltransferase (240 aa).

The S-adenosyl-L-methionine site is built by Arg44, Gly64, Asp85, and Met129.

Belongs to the methyltransferase superfamily. UbiG/COQ3 family.

It carries out the reaction a 3-demethylubiquinol + S-adenosyl-L-methionine = a ubiquinol + S-adenosyl-L-homocysteine + H(+). The catalysed reaction is a 3-(all-trans-polyprenyl)benzene-1,2-diol + S-adenosyl-L-methionine = a 2-methoxy-6-(all-trans-polyprenyl)phenol + S-adenosyl-L-homocysteine + H(+). The protein operates within cofactor biosynthesis; ubiquinone biosynthesis. Its function is as follows. O-methyltransferase that catalyzes the 2 O-methylation steps in the ubiquinone biosynthetic pathway. This chain is Ubiquinone biosynthesis O-methyltransferase, found in Escherichia coli O7:K1 (strain IAI39 / ExPEC).